The sequence spans 363 residues: NAD(P)H-quinone oxidoreductase subunit 1, chloroplastic (363 aa).

The next 6 helical transmembrane spans lie at 27 to 47, 98 to 118, 127 to 147, 248 to 268, 300 to 320, and 336 to 356; these read IWLF…VLVI, FSIG…VIPF, LSIG…GLLM, YSGI…LVSS, VFGT…FLFI, and LLNL…LLTT.

This sequence belongs to the complex I subunit 1 family. In terms of assembly, NDH is composed of at least 16 different subunits, 5 of which are encoded in the nucleus.

It localises to the plastid. Its subcellular location is the chloroplast thylakoid membrane. The enzyme catalyses a plastoquinone + NADH + (n+1) H(+)(in) = a plastoquinol + NAD(+) + n H(+)(out). It catalyses the reaction a plastoquinone + NADPH + (n+1) H(+)(in) = a plastoquinol + NADP(+) + n H(+)(out). Its function is as follows. NDH shuttles electrons from NAD(P)H:plastoquinone, via FMN and iron-sulfur (Fe-S) centers, to quinones in the photosynthetic chain and possibly in a chloroplast respiratory chain. The immediate electron acceptor for the enzyme in this species is believed to be plastoquinone. Couples the redox reaction to proton translocation, and thus conserves the redox energy in a proton gradient. The polypeptide is NAD(P)H-quinone oxidoreductase subunit 1, chloroplastic (Amborella trichopoda).